The following is a 79-amino-acid chain: Large ribosomal subunit protein bL28 (79 aa).

The interval 1-26 (MAKVCQVTGKRPQSGNNVSHANKKTN) is disordered. Residues 11–20 (RPQSGNNVSH) show a composition bias toward polar residues.

The protein belongs to the bacterial ribosomal protein bL28 family.

In Coxiella burnetii (strain CbuK_Q154) (Coxiella burnetii (strain Q154)), this protein is Large ribosomal subunit protein bL28.